The sequence spans 526 residues: Probable feruloyl esterase B-2 (526 aa).

The first 19 residues, 1–19, serve as a signal peptide directing secretion; that stretch reads MPSLRRLLPFLAAGSAALA. 2 cysteine pairs are disulfide-bonded: Cys28–Cys75 and Cys63–Cys114. Asn53, Asn85, Asn98, and Asn138 each carry an N-linked (GlcNAc...) asparagine glycan. Intrachain disulfides connect Cys187–Cys441, Cys256–Cys273, and Cys282–Cys291. Catalysis depends on Ser188, which acts as the Acyl-ester intermediate. N-linked (GlcNAc...) asparagine glycosylation is present at Asn246. Positions 257, 260, 262, 264, and 266 each coordinate Ca(2+). N-linked (GlcNAc...) asparagine glycans are attached at residues Asn287 and Asn311. Active-site charge relay system residues include Asp400 and His440. Asn490 and Asn516 each carry an N-linked (GlcNAc...) asparagine glycan. A disulfide bond links Cys503 and Cys525.

This sequence belongs to the tannase family.

The protein resides in the secreted. It carries out the reaction feruloyl-polysaccharide + H2O = ferulate + polysaccharide.. Its function is as follows. Involved in degradation of plant cell walls. Hydrolyzes the feruloyl-arabinose ester bond in arabinoxylans as well as the feruloyl-galactose and feruloyl-arabinose ester bonds in pectin. The chain is Probable feruloyl esterase B-2 (faeB-2) from Aspergillus oryzae (strain ATCC 42149 / RIB 40) (Yellow koji mold).